The sequence spans 671 residues: Acetyl-coenzyme A synthetase 2 (671 aa).

CoA contacts are provided by residues 207–210 and Thr326; that span reads RGGR. Residues 402 to 404, 426 to 431, Asp517, and Arg532 each bind ATP; these read GEP and DTYWQT. CoA is bound at residue Ser540. Residue Arg543 coordinates ATP. Arg603 provides a ligand contact to CoA.

The protein belongs to the ATP-dependent AMP-binding enzyme family.

It catalyses the reaction acetate + ATP + CoA = acetyl-CoA + AMP + diphosphate. This chain is Acetyl-coenzyme A synthetase 2 (ACS2), found in Candida albicans (strain SC5314 / ATCC MYA-2876) (Yeast).